Consider the following 423-residue polypeptide: ATP-dependent Clp protease ATP-binding subunit ClpX (423 aa).

A ClpX-type ZB domain is found at 1–50 (MTDDTEYRCSFCGKEHHQVDDLIAGPDVRICSECVVLSCEIVEDRRNEAL). The Zn(2+) site is built by Cys9, Cys12, Cys31, and Cys34. 126–133 (PTGCGKTY) lines the ATP pocket.

The protein belongs to the ClpX chaperone family. In terms of assembly, component of the ClpX-ClpP complex. Forms a hexameric ring that, in the presence of ATP, binds to fourteen ClpP subunits assembled into a disk-like structure with a central cavity, resembling the structure of eukaryotic proteasomes.

Functionally, ATP-dependent specificity component of the Clp protease. It directs the protease to specific substrates. Can perform chaperone functions in the absence of ClpP. The sequence is that of ATP-dependent Clp protease ATP-binding subunit ClpX from Tropheryma whipplei (strain TW08/27) (Whipple's bacillus).